A 244-amino-acid chain; its full sequence is Phosphoribosyl isomerase A (244 aa).

Aspartate 10 serves as the catalytic Proton acceptor. Residue aspartate 129 is the Proton donor of the active site.

This sequence belongs to the HisA/HisF family.

It localises to the cytoplasm. The enzyme catalyses 1-(5-phospho-beta-D-ribosyl)-5-[(5-phospho-beta-D-ribosylamino)methylideneamino]imidazole-4-carboxamide = 5-[(5-phospho-1-deoxy-D-ribulos-1-ylimino)methylamino]-1-(5-phospho-beta-D-ribosyl)imidazole-4-carboxamide. It carries out the reaction N-(5-phospho-beta-D-ribosyl)anthranilate = 1-(2-carboxyphenylamino)-1-deoxy-D-ribulose 5-phosphate. The protein operates within amino-acid biosynthesis; L-histidine biosynthesis; L-histidine from 5-phospho-alpha-D-ribose 1-diphosphate: step 4/9. It participates in amino-acid biosynthesis; L-tryptophan biosynthesis; L-tryptophan from chorismate: step 3/5. Involved in both the histidine and tryptophan biosynthetic pathways. The sequence is that of Phosphoribosyl isomerase A (priA) from Mycobacterium tuberculosis (strain CDC 1551 / Oshkosh).